A 181-amino-acid chain; its full sequence is Regulator of G-protein signaling 10 (181 aa).

Residues 1-35 (MFTRAVSRLSRKRPPSDIHDGDGSSSSGHQSLKST) are disordered. Residues Ser24 and Ser41 each carry the phosphoserine modification. Positions 41-156 (SLENLLEDPE…LKSDLFLKHR (116 aa)) constitute an RGS domain. Residue Cys74 is the site of S-palmitoyl cysteine attachment. Residues 157–181 (RTEEEEEDPPDAQTAAKRASRIYNT) are disordered. Phosphoserine is present on Ser176.

Interacts with GNAZ, GNAI1 and GNAI3. Associates specifically with the activated, GTP-bound forms of GNAZ and GNAI3.

Its subcellular location is the cytoplasm. It is found in the cytosol. The protein localises to the nucleus. Functionally, regulates G protein-coupled receptor signaling cascades, including signaling downstream of the muscarinic acetylcholine receptor CHRM2. Inhibits signal transduction by increasing the GTPase activity of G protein alpha subunits, thereby driving them into their inactive GDP-bound form. Modulates the activity of potassium channels that are activated in response to CHRM2 signaling. Activity on GNAZ is inhibited by palmitoylation of the G-protein. This chain is Regulator of G-protein signaling 10 (Rgs10), found in Rattus norvegicus (Rat).